Here is a 342-residue protein sequence, read N- to C-terminus: Methylthioribose-1-phosphate isomerase (342 aa).

Residues 49 to 51 (RGA), R86, and Q187 each bind substrate. D228 acts as the Proton donor in catalysis. 238–239 (NK) serves as a coordination point for substrate.

The protein belongs to the eIF-2B alpha/beta/delta subunits family. MtnA subfamily.

It catalyses the reaction 5-(methylsulfanyl)-alpha-D-ribose 1-phosphate = 5-(methylsulfanyl)-D-ribulose 1-phosphate. It functions in the pathway amino-acid biosynthesis; L-methionine biosynthesis via salvage pathway; L-methionine from S-methyl-5-thio-alpha-D-ribose 1-phosphate: step 1/6. Catalyzes the interconversion of methylthioribose-1-phosphate (MTR-1-P) into methylthioribulose-1-phosphate (MTRu-1-P). This chain is Methylthioribose-1-phosphate isomerase, found in Serratia proteamaculans (strain 568).